Consider the following 314-residue polypeptide: Aspartate carbamoyltransferase catalytic subunit (314 aa).

Residues R55 and T56 each contribute to the carbamoyl phosphate site. K83 is a binding site for L-aspartate. 3 residues coordinate carbamoyl phosphate: R105, H139, and Q142. Residues R172 and R226 each coordinate L-aspartate. The carbamoyl phosphate site is built by G267 and P268.

Belongs to the aspartate/ornithine carbamoyltransferase superfamily. ATCase family. As to quaternary structure, heterododecamer (2C3:3R2) of six catalytic PyrB chains organized as two trimers (C3), and six regulatory PyrI chains organized as three dimers (R2).

It carries out the reaction carbamoyl phosphate + L-aspartate = N-carbamoyl-L-aspartate + phosphate + H(+). The protein operates within pyrimidine metabolism; UMP biosynthesis via de novo pathway; (S)-dihydroorotate from bicarbonate: step 2/3. In terms of biological role, catalyzes the condensation of carbamoyl phosphate and aspartate to form carbamoyl aspartate and inorganic phosphate, the committed step in the de novo pyrimidine nucleotide biosynthesis pathway. This Rhodococcus erythropolis (strain PR4 / NBRC 100887) protein is Aspartate carbamoyltransferase catalytic subunit.